The sequence spans 217 residues: Ras-related protein Rab-19 (217 aa).

Positions 26, 28, 29, 30, 31, 32, 42, 43, 44, 45, and 49 each coordinate GTP. Threonine 31 provides a ligand contact to Mg(2+). The Switch 1 motif lies at 39 to 54; the sequence is SGVYSESQQNTIGVDF. The Mg(2+) site is built by threonine 49 and aspartate 72. Positions 74–89 match the Switch 2 motif; it reads AGQERFRTITQSYYRS. 7 residues coordinate GTP: glycine 75, asparagine 130, lysine 131, aspartate 133, serine 161, alanine 162, and lysine 163. S-geranylgeranyl cysteine attachment occurs at residues cysteine 215 and cysteine 217. At cysteine 217 the chain carries Cysteine methyl ester.

It belongs to the small GTPase superfamily. Rab family. Mg(2+) is required as a cofactor. In terms of tissue distribution, expressed in a tissue-specific manner. Detected at high levels in intestine, lung and spleen, and at a lower level in kidney.

The protein resides in the cell membrane. It catalyses the reaction GTP + H2O = GDP + phosphate + H(+). Its activity is regulated as follows. Regulated by guanine nucleotide exchange factors (GEFs) which promote the exchange of bound GDP for free GTP. Regulated by GTPase activating proteins (GAPs) which increase the GTP hydrolysis activity. Inhibited by GDP dissociation inhibitors (GDIs). Its function is as follows. The small GTPases Rab are key regulators of intracellular membrane trafficking, from the formation of transport vesicles to their fusion with membranes. Rabs cycle between an inactive GDP-bound form and an active GTP-bound form that is able to recruit to membranes different set of downstream effectors directly responsible for vesicle formation, movement, tethering and fusion. This chain is Ras-related protein Rab-19, found in Mus musculus (Mouse).